Consider the following 319-residue polypeptide: Acetyl-coenzyme A carboxylase carboxyl transferase subunit alpha (319 aa).

The 262-residue stretch at 35-296 (NLDEEVQRLR…KAQLLADLND (262 aa)) folds into the CoA carboxyltransferase C-terminal domain.

It belongs to the AccA family. Acetyl-CoA carboxylase is a heterohexamer composed of biotin carboxyl carrier protein (AccB), biotin carboxylase (AccC) and two subunits each of ACCase subunit alpha (AccA) and ACCase subunit beta (AccD).

It localises to the cytoplasm. The catalysed reaction is N(6)-carboxybiotinyl-L-lysyl-[protein] + acetyl-CoA = N(6)-biotinyl-L-lysyl-[protein] + malonyl-CoA. It functions in the pathway lipid metabolism; malonyl-CoA biosynthesis; malonyl-CoA from acetyl-CoA: step 1/1. Functionally, component of the acetyl coenzyme A carboxylase (ACC) complex. First, biotin carboxylase catalyzes the carboxylation of biotin on its carrier protein (BCCP) and then the CO(2) group is transferred by the carboxyltransferase to acetyl-CoA to form malonyl-CoA. This Yersinia pseudotuberculosis serotype O:3 (strain YPIII) protein is Acetyl-coenzyme A carboxylase carboxyl transferase subunit alpha.